A 1164-amino-acid chain; its full sequence is Phospholipid-transporting ATPase IA (1164 aa).

The Cytoplasmic segment spans residues 1–65; it reads MPTMRRTVSE…TAKYNIITFL (65 aa). At S25 the chain carries Phosphoserine. T28 bears the Phosphothreonine mark. S29 is modified (phosphoserine). Residues 66-86 form a helical membrane-spanning segment; that stretch reads PRFLYSQFRRAANSFFLFIAL. At 87–92 the chain is on the exoplasmic loop side; it reads LQQIPD. The helical transmembrane segment at 93 to 115 threads the bilayer; the sequence is VSPTGRYTTLVPLLFILAVAAIK. The Cytoplasmic segment spans residues 116–297; the sequence is EIIEDIKRHK…SNVERITNVQ (182 aa). The chain crosses the membrane as a helical span at residues 298–319; the sequence is ILILFCILIAMSLVCSVGSAIW. The Exoplasmic loop segment spans residues 320 to 344; that stretch reads NRRHSGKDWYLNLNYGGASNFGLNF. The helical transmembrane segment at 345–366 threads the bilayer; that stretch reads LTFIILFNNLIPISLLVTLEVV. The Cytoplasmic portion of the chain corresponds to 367 to 857; the sequence is KFTQAYFINW…GAWNYNRVSK (491 aa). D409 serves as the catalytic 4-aspartylphosphate intermediate. Residues D409, K410, and T411 each contribute to the ATP site. Residue D409 coordinates Mg(2+). A Mg(2+)-binding site is contributed by T411. S443 carries the phosphoserine modification. Residues E508, F549, K572, R605, T685, G686, D687, 741–748, R775, and K781 contribute to the ATP site; that span reads ALIIDGKT. D801 is a binding site for Mg(2+). 2 residues coordinate ATP: N804 and D805. D805 contributes to the Mg(2+) binding site. Residues 858–878 form a helical membrane-spanning segment; the sequence is CILYCFYKNIVLYIIEIWFAF. Residues 879–890 lie on the Exoplasmic loop side of the membrane; the sequence is VNGFSGQILFER. A helical membrane pass occupies residues 891 to 910; it reads WCIGLYNVMFTAMPPLTLGI. At 911–940 the chain is on the cytoplasmic side; that stretch reads FERSCRKENMLKYPELYKTSQNALDFNTKV. A helical transmembrane segment spans residues 941 to 962; the sequence is FWVHCLNGLFHSVILFWFPLKA. The Exoplasmic loop segment spans residues 963–976; that stretch reads LQYGTAFGNGKTSD. The chain crosses the membrane as a helical span at residues 977–999; that stretch reads YLLLGNFVYTFVVITVCLKAGLE. Topologically, residues 1000 to 1005 are cytoplasmic; it reads TSYWTW. The helical transmembrane segment at 1006–1026 threads the bilayer; that stretch reads FSHIAIWGSIALWVVFFGIYS. Residues 1027 to 1044 are Exoplasmic loop-facing; that stretch reads SLWPAIPMAPDMSGEAAM. The helical transmembrane segment at 1045-1070 threads the bilayer; sequence LFSSGVFWMGLLFIPVASLLLDVVYK. The Cytoplasmic segment spans residues 1071 to 1164; the sequence is VIKRTAFKTL…DTTKQRPDEW (94 aa). 1095–1102 is an ATP binding site; it reads GAVVLGKS. S1126 bears the Phosphoserine mark.

The protein belongs to the cation transport ATPase (P-type) (TC 3.A.3) family. Type IV subfamily. Component of a P4-ATPase flippase complex which consists of a catalytic alpha subunit and an accessory beta subunit. Interacts with TMEM30A to form a flippase complex; this complex forms an intermediate phosphoenzyme. Interacts with TMEM30B; this interaction is reported conflictingly. The cofactor is Mg(2+). In terms of processing, cleaved by calpain in a caspase- and calcium influx-dependent manner during platelet apoptosis leading to a 100 kDa polypeptide. Found in most adult tissues except liver, testis and placenta. Most abundant in heart, brain and skeletal muscle. Also detected in fetal tissues. Isoform 1 is only detected in brain, skeletal muscle and heart and is the most abundant form in skeletal muscle. Highly expressed in platelets.

It is found in the cytoplasmic vesicle. It localises to the secretory vesicle. Its subcellular location is the chromaffin granule membrane. The protein resides in the cytoplasmic granule. The protein localises to the cell membrane. It is found in the endoplasmic reticulum. It localises to the golgi apparatus. It catalyses the reaction ATP + H2O + phospholipidSide 1 = ADP + phosphate + phospholipidSide 2.. It carries out the reaction a 1,2-diacyl-sn-glycero-3-phospho-L-serine(out) + ATP + H2O = a 1,2-diacyl-sn-glycero-3-phospho-L-serine(in) + ADP + phosphate + H(+). ATPase activity is stimulated by phosphatidylserine (PS) and minimally by phosphatidylethanolamine (PE). ATPase activity is inhibited by beryllium fluoride and aluminum trifluoride. Functionally, catalytic component of a P4-ATPase flippase complex which catalyzes the hydrolysis of ATP coupled to the transport of aminophospholipids from the outer to the inner leaflet of various membranes and ensures the maintenance of asymmetric distribution of phospholipids. Phospholipid translocation also seems to be implicated in vesicle formation and in uptake of lipid signaling molecules. In vitro, its ATPase activity is selectively and stereospecifically stimulated by phosphatidylserine (PS). The flippase complex ATP8A1:TMEM30A seems to play a role in regulation of cell migration probably involving flippase-mediated translocation of phosphatidylethanolamine (PE) at the cell membrane. Acts as aminophospholipid translocase at the cell membrane in neuronal cells. This is Phospholipid-transporting ATPase IA from Homo sapiens (Human).